Consider the following 465-residue polypeptide: Juvenile hormone epoxide hydrolase 2 (465 aa).

The chain crosses the membrane as a helical span at residues 7-27; it reads ILWIAIVIGLGVLYYEITKEF. Asp-224 functions as the Nucleophile in the catalytic mechanism. Tyr-370 functions as the Proton donor in the catalytic mechanism. His-427 acts as the Proton acceptor in catalysis.

This sequence belongs to the peptidase S33 family.

It is found in the microsome membrane. Its subcellular location is the endoplasmic reticulum membrane. The catalysed reaction is cis-stilbene oxide + H2O = (1R,2R)-hydrobenzoin. The enzyme catalyses 1-(4-methoxyphenyl)-N-methyl-N-[(3-methyloxetan-3-yl)methyl]methanamine + H2O = 2-{[(4-methoxybenzyl)(methyl)amino]methyl}-2-methylpropane-1,3-diol. Functionally, catalyzes juvenile hormone hydrolysis. The chain is Juvenile hormone epoxide hydrolase 2 from Ctenocephalides felis (Cat flea).